A 480-amino-acid chain; its full sequence is Beta-glucosidase A (480 aa).

The active-site Proton donor is Glu177. Catalysis depends on Glu378, which acts as the Nucleophile.

It belongs to the glycosyl hydrolase 1 family.

The catalysed reaction is Hydrolysis of terminal, non-reducing beta-D-glucosyl residues with release of beta-D-glucose.. The sequence is that of Beta-glucosidase A (bglA) from Enterobacter agglomerans (Erwinia herbicola).